The primary structure comprises 383 residues: MKNKLPPFIEIYRALIATPSISATEEALDQSNADLITLLADWFKDLGFNVEVQPVPGTRNKFNMLASIGQGAGGLLLAGHTDTVPFDDGRWTRDPFTLTEHDGKLYGLGTADMKGFFAFILDALRDVDVTKLKKPLYILATADEETSMAGARYFAETTALRPDCAIIGEPTSLQPVRAHKGHISNAIRIQGQSGHSSDPARGVNAIELMHDAIGHILQLRDNLKERYHYEAFTVPYPTLNLGHIHGGDASNRICACCELHMDIRPLPGMTFNELNGLLNDALAPVSERWPGRLTVDELHPPIPGYECPPNHQLVEVVEKLLGAKTEVVNYCTEAPFIQTLCPTLVLGPGSINQAHQPDEYLETRFIKPTRELIIQVIHHFCWH.

H80 lines the Zn(2+) pocket. Residue D82 is part of the active site. D112 contributes to the Zn(2+) binding site. E144 is an active-site residue. Zn(2+) is bound by residues E145, E169, and H355.

It belongs to the peptidase M20A family. ArgE subfamily. In terms of assembly, homodimer. Zn(2+) serves as cofactor. It depends on Co(2+) as a cofactor. The cofactor is glutathione.

It is found in the cytoplasm. The enzyme catalyses N(2)-acetyl-L-ornithine + H2O = L-ornithine + acetate. It participates in amino-acid biosynthesis; L-arginine biosynthesis; L-ornithine from N(2)-acetyl-L-ornithine (linear): step 1/1. In terms of biological role, catalyzes the hydrolysis of the amide bond of N(2)-acetylated L-amino acids. Cleaves the acetyl group from N-acetyl-L-ornithine to form L-ornithine, an intermediate in L-arginine biosynthesis pathway, and a branchpoint in the synthesis of polyamines. The protein is Acetylornithine deacetylase of Shigella boydii serotype 18 (strain CDC 3083-94 / BS512).